Here is a 451-residue protein sequence, read N- to C-terminus: Uronate isomerase (451 aa).

The protein belongs to the metallo-dependent hydrolases superfamily. Uronate isomerase family.

It carries out the reaction D-glucuronate = D-fructuronate. The enzyme catalyses aldehydo-D-galacturonate = keto-D-tagaturonate. It functions in the pathway carbohydrate metabolism; pentose and glucuronate interconversion. This Thermotoga sp. (strain RQ2) protein is Uronate isomerase.